The following is an 809-amino-acid chain: Leucine--tRNA ligase (809 aa).

The 'HIGH' region motif lies at 40–50 (PYPSGRIHMGH). The 'KMSKS' region motif lies at 579–583 (KMSKS). Lys582 lines the ATP pocket.

Belongs to the class-I aminoacyl-tRNA synthetase family.

Its subcellular location is the cytoplasm. The enzyme catalyses tRNA(Leu) + L-leucine + ATP = L-leucyl-tRNA(Leu) + AMP + diphosphate. The chain is Leucine--tRNA ligase from Campylobacter jejuni (strain RM1221).